Here is a 127-residue protein sequence, read N- to C-terminus: Fluoride-specific ion channel FluC (127 aa).

Helical transmembrane passes span 4–24 (LLLAVFIGGGTGSVARWLLSM), 35–55 (LGTLAANLIGAFIIGMGFAWF), 71–91 (TGFCGGLTTFSTFSAEVVFLL), and 103–123 (VFVNLLGSFAMTALAFWLFSA). 2 residues coordinate Na(+): glycine 75 and threonine 78.

The protein belongs to the fluoride channel Fluc/FEX (TC 1.A.43) family.

The protein resides in the cell inner membrane. It carries out the reaction fluoride(in) = fluoride(out). Its activity is regulated as follows. Na(+) is not transported, but it plays an essential structural role and its presence is essential for fluoride channel function. Fluoride-specific ion channel. Important for reducing fluoride concentration in the cell, thus reducing its toxicity. This is Fluoride-specific ion channel FluC from Escherichia coli O81 (strain ED1a).